The following is a 478-amino-acid chain: UDP-glycosyltransferase 71B5 (478 aa).

UDP-alpha-D-glucose-binding positions include serine 280, 347-349 (APQ), 364-372 (HCGWNSILE), and 386-389 (YAEQ).

Belongs to the UDP-glycosyltransferase family.

Functionally, possesses low quercetin 3-O-glucosyltransferase activity in vitro. The protein is UDP-glycosyltransferase 71B5 (UGT71B5) of Arabidopsis thaliana (Mouse-ear cress).